Reading from the N-terminus, the 449-residue chain is C4-dicarboxylate transport protein (449 aa).

Helical transmembrane passes span 5–25, 45–65, 77–97, 149–169, 185–205, 231–251, 298–318, 332–352, and 353–373; these read AVFK…VSLG, LIKM…IAGM, LAVL…LIVV, GDML…HSFG, VLFG…FGAM, CVIF…FSII, GYSF…VFIA, TLLV…GSGF, and IVLA…LALI.

Belongs to the dicarboxylate/amino acid:cation symporter (DAACS) (TC 2.A.23) family.

It localises to the cell inner membrane. In terms of biological role, responsible for the transport of dicarboxylates such as succinate, fumarate, and malate from the periplasm across the membrane. The sequence is that of C4-dicarboxylate transport protein from Dechloromonas aromatica (strain RCB).